The primary structure comprises 424 residues: Histidine--tRNA ligase (424 aa).

This sequence belongs to the class-II aminoacyl-tRNA synthetase family. Homodimer.

It is found in the cytoplasm. The enzyme catalyses tRNA(His) + L-histidine + ATP = L-histidyl-tRNA(His) + AMP + diphosphate + H(+). The chain is Histidine--tRNA ligase from Escherichia coli (strain 55989 / EAEC).